The sequence spans 387 residues: Mannitol-1-phosphate 5-dehydrogenase (387 aa).

Residue 3–14 (AVHFGAGNIGRG) participates in NAD(+) binding.

This sequence belongs to the mannitol dehydrogenase family.

It carries out the reaction D-mannitol 1-phosphate + NAD(+) = beta-D-fructose 6-phosphate + NADH + H(+). This is Mannitol-1-phosphate 5-dehydrogenase from Pseudarthrobacter chlorophenolicus (strain ATCC 700700 / DSM 12829 / CIP 107037 / JCM 12360 / KCTC 9906 / NCIMB 13794 / A6) (Arthrobacter chlorophenolicus).